The chain runs to 192 residues: Thymidylate kinase (192 aa).

G7–S14 contributes to the ATP binding site.

Belongs to the thymidylate kinase family.

It carries out the reaction dTMP + ATP = dTDP + ADP. Its function is as follows. Phosphorylation of dTMP to form dTDP in both de novo and salvage pathways of dTTP synthesis. This chain is Thymidylate kinase, found in Campylobacter jejuni subsp. jejuni serotype O:6 (strain 81116 / NCTC 11828).